The primary structure comprises 375 residues: MPTMIKKDDKAMEPPNEKPHRKIERDDVPESSNHIPPPESGVLKGGKVNSKTRALKAVTSIIADADENPQKKVNNETNGVQKQKTEDLSKRIGKFEYLFYKFLLVLLYICFGLFRYGQYQYNKMKLRIFSIIYNHAYTPQLIRQDVIPLKKIPKRLAAILEVKPVGDVGGGVTGLLNDASEIVCWTVSAGIKHLMLYDYDGILQRNVPELRMEIHSNLAKYFGPAHVPNYAVKIPHSNKIFYNLDGIETETDVGNEIEANQEKDKIAIEISLLSNRDGRETIVDLTKTMAELCAVNELSVSDITMDLVDSELKQLVGPEPDLLLYFGPSLDLQGFPPWHIRLTEFYWEKDNNEVIYSVFIRGLRQYAGCKVNVGK.

Residues 1-28 (MPTMIKKDDKAMEPPNEKPHRKIERDDV) are compositionally biased toward basic and acidic residues. The segment at 1–48 (MPTMIKKDDKAMEPPNEKPHRKIERDDVPESSNHIPPPESGVLKGGKV) is disordered. Residues 97 to 119 (YLFYKFLLVLLYICFGLFRYGQY) form a helical membrane-spanning segment.

The protein belongs to the UPP synthase family. Forms an active dehydrodolichyl diphosphate synthase complex with either SRT1 or RER2. The cofactor is Mg(2+).

It is found in the endoplasmic reticulum membrane. Its subcellular location is the lipid droplet. The protein resides in the nucleus membrane. It carries out the reaction n isopentenyl diphosphate + (2E,6E)-farnesyl diphosphate = a di-trans,poly-cis-polyprenyl diphosphate + n diphosphate. Its pathway is protein modification; protein glycosylation. In terms of biological role, with SRT1 or RER2, forms the dehydrodolichyl diphosphate synthase (DDS) complex, an essential component of the dolichol monophosphate (Dol-P) biosynthetic machinery. Adds multiple copies of isopentenyl pyrophosphate (IPP) to farnesyl pyrophosphate (FPP) to produce dehydrodolichyl diphosphate (Dedol-PP), a precursor of dolichol which is utilized as a sugar carrier in protein glycosylation in the endoplasmic reticulum (ER). The sequence is that of Dehydrodolichyl diphosphate synthase complex subunit NUS1 (NUS1) from Saccharomyces cerevisiae (strain ATCC 204508 / S288c) (Baker's yeast).